A 3038-amino-acid polypeptide reads, in one-letter code: Lovastatin nonaketide synthase, polyketide synthase component (3038 aa).

The 440-residue stretch at 8–447 (NEPIVVVGSG…GTNAHAIIEE (440 aa)) folds into the Ketosynthase family 3 (KS3) domain. Active-site for beta-ketoacyl synthase activity residues include Cys-181, His-320, and His-367. The segment at 562–889 (IFTGQGAQWP…GKNDLDTFSR (328 aa)) is malonyl-CoA:ACP transacylase (MAT) domain. Catalysis depends on Ser-656, which acts as the For malonyltransferase activity. Positions 695–757 (AMLAAGMSFE…DESTFARLLR (63 aa)) are lovC-binding. The N-terminal hotdog fold stretch occupies residues 953–1089 (HLLLGKLSEY…GQLALMIGDV (137 aa)). The tract at residues 953-1263 (HLLLGKLSEY…ENITFKPFSP (311 aa)) is dehydratase (DH) domain. The PKS/mFAS DH domain maps to 953–1267 (HLLLGKLSEY…FKPFSPPDAS (315 aa)). The active-site Proton acceptor; for dehydratase activity is the His-985. The segment at 1107-1267 (EEHPHMNRVN…FKPFSPPDAS (161 aa)) is C-terminal hotdog fold. Asp-1174 serves as the catalytic Proton donor; for dehydratase activity. Positions 1443-1543 (LEIGAGTGGA…ARSLLKPGGQ (101 aa)) are methyltransferase (CMet) domain. Residues 2139 to 2437 (TLPTRVRSID…KIPEYRGAKA (299 aa)) are ketoreductase (KR) domain. The 76-residue stretch at 2463–2538 (QIVIDGLSAK…DLADEAAARL (76 aa)) folds into the Carrier domain. Ser-2498 bears the O-(pantetheine 4'-phosphoryl)serine mark. The interval 2546-2602 (VAATDGGAESTDNTSENEVSGREDTDLSAAATITEPSSADEDDTEPGDEDVPRSHHP) is disordered. The segment covering 2583–2594 (SADEDDTEPGDE) has biased composition (acidic residues). Residues 2602–2952 (PLSLGQEYSW…PTSNQPAPLL (351 aa)) form an inactive Condensation domain region.

As to quaternary structure, homodimer. Each MAT domain from the lovB homodimer binds one lovC molecule to form the final active lovB-lovC megasynthase complex. It depends on pantetheine 4'-phosphate as a cofactor.

The catalysed reaction is holo-[lovastatin nonaketide synthase] + 9 malonyl-CoA + S-adenosyl-L-methionine + 11 NADPH + 19 H(+) = dihydromonacolin L-[lovastatin nonaketide synthase] + S-adenosyl-L-homocysteine + 9 CO2 + 11 NADP(+) + 9 CoA + 6 H2O. The protein operates within polyketide biosynthesis; lovastatin biosynthesis. Its function is as follows. Lovastatin nonaketide synthase; part of the gene cluster that mediates the biosynthesis of lovastatin (also known as mevinolin, mevacor or monacolin K), a hypolipidemic inhibitor of (3S)-hydroxymethylglutaryl-coenzyme A (HMG-CoA) reductase (HMGR). The first step in the biosynthesis of lovastatin is the production of dihydromonacolin L acid by the lovastatin nonaketide synthase lovB and the trans-acting enoyl reductase lovC (called the lovB-lovC megasynthase complex) via condensation of one acetyl-CoA unit and 8 malonyl-CoA units. Dihydromonacolin L acid is released from lovB by the thioesterase lovG. Next, dihydromonacolin L acid is oxidized by the dihydromonacolin L monooxygenase lovA twice to form monacolin J acid. The 2-methylbutyrate moiety of lovastatin is synthesized by the lovastatin diketide synthase lovF via condensation of one acetyl-CoA unit and one malonyl-CoA unit. Finally, the covalent attachment of this moiety to monacolin J acid is catalyzed by the transesterase lovD to yield lovastatin. LovD has broad substrate specificity and can also convert monacolin J to simvastatin using alpha-dimethylbutanoyl-S-methyl-3-mercaptopropionate (DMB-S-MMP) as the thioester acyl donor, and can also catalyze the reverse reaction and function as hydrolase in vitro. LovD has much higher activity with LovF-bound 2-methylbutanoate than with free diketide substrates. The polypeptide is Lovastatin nonaketide synthase, polyketide synthase component (lovB) (Aspergillus terreus (strain NIH 2624 / FGSC A1156)).